The chain runs to 189 residues: Imidazoleglycerol-phosphate dehydratase (189 aa).

It belongs to the imidazoleglycerol-phosphate dehydratase family.

It localises to the cytoplasm. It carries out the reaction D-erythro-1-(imidazol-4-yl)glycerol 3-phosphate = 3-(imidazol-4-yl)-2-oxopropyl phosphate + H2O. It functions in the pathway amino-acid biosynthesis; L-histidine biosynthesis; L-histidine from 5-phospho-alpha-D-ribose 1-diphosphate: step 6/9. The chain is Imidazoleglycerol-phosphate dehydratase from Nautilia profundicola (strain ATCC BAA-1463 / DSM 18972 / AmH).